The chain runs to 555 residues: Perforin-1 (555 aa).

An N-terminal signal peptide occupies residues 1–21 (MAARLLLLGILLLLLPLPVPA). 3 disulfides stabilise this stretch: cysteine 23–cysteine 76, cysteine 31–cysteine 73, and cysteine 102–cysteine 176. Residues 27-375 (ARSECKRSHK…QYLTDRARWR (349 aa)) form the MACPF domain. A beta stranded transmembrane segment spans residues 129–149 (WKVGLDVTPKPTSNVHVSVAG). A glycan (N-linked (GlcNAc...) asparagine) is linked at asparagine 205. 4 disulfides stabilise this stretch: cysteine 242/cysteine 408, cysteine 377/cysteine 393, cysteine 381/cysteine 395, and cysteine 397/cysteine 407. The chain crosses the membrane as a beta stranded span at residues 257–279 (CLTVEAQVNIGIHGSISAEAKAC). An EGF-like domain is found at 376–408 (DCSRPCPPGRQKSPRDPCQCVCHGSAVTTQDCC). One can recognise a C2 domain in the interval 397 to 519 (CHGSAVTTQD…CNLNHGHLKF (123 aa)). Residues glycine 429, aspartate 430, threonine 433, alanine 434, aspartate 436, aspartate 484, aspartate 486, aspartate 490, aspartate 491, and aspartate 492 each contribute to the Ca(2+) site. 2 disulfide bridges follow: cysteine 497–cysteine 510 and cysteine 525–cysteine 534. Asparagine 549 carries an N-linked (GlcNAc...) asparagine glycan.

The protein belongs to the complement C6/C7/C8/C9 family. As to quaternary structure, monomer, as soluble protein. Homooligomer; homooligomerizes to form a pore-forming ring. Ca(2+) is required as a cofactor. In terms of processing, N-glycosylated.

It localises to the cytolytic granule. Its subcellular location is the secreted. The protein localises to the cell membrane. It is found in the endosome lumen. Pore-forming protein that plays a key role in granzyme-mediated programmed cell death, and in defense against virus-infected or neoplastic cells. Plays an important role in killing other cells that are recognized as non-self by the immune system, e.g. in transplant rejection or some forms of autoimmune disease. Can insert into the membrane of target cells in its calcium-bound form, oligomerize and form large pores. Promotes cytolysis and apoptosis of target cells by mediating the passage and uptake of cytotoxic granzymes. Facilitates the delivery of cationic cargo protein, while anionic or neural proteins are not delivered efficiently. Perforin pores allow the release of mature caspase-7 (CASP7) into the extracellular milieu. In Homo sapiens (Human), this protein is Perforin-1 (PRF1).